The sequence spans 245 residues: Thiopurine S-methyltransferase (245 aa).

Serine 14 bears the Phosphoserine mark. 29 to 40 (WQDKWVNGNTAF) provides a ligand contact to S-adenosyl-L-methionine. Phenylalanine 40 serves as a coordination point for substrate. Position 58 is an N6-acetyllysine (lysine 58). Residues leucine 69, glutamate 90, 134–135 (SI), and arginine 152 each bind S-adenosyl-L-methionine.

This sequence belongs to the class I-like SAM-binding methyltransferase superfamily. TPMT family. As to quaternary structure, monomer.

It localises to the cytoplasm. The catalysed reaction is S-adenosyl-L-methionine + a thiopurine = S-adenosyl-L-homocysteine + a thiopurine S-methylether.. The protein is Thiopurine S-methyltransferase (TPMT) of Pongo pygmaeus (Bornean orangutan).